Reading from the N-terminus, the 856-residue chain is DNA mismatch repair protein MutS (856 aa).

Position 618 to 625 (618 to 625) interacts with ATP; that stretch reads GPNMGGKS.

Belongs to the DNA mismatch repair MutS family.

Its function is as follows. This protein is involved in the repair of mismatches in DNA. It is possible that it carries out the mismatch recognition step. This protein has a weak ATPase activity. This Shewanella baltica (strain OS223) protein is DNA mismatch repair protein MutS.